The primary structure comprises 478 residues: Phosphatidylinositol 4-kinase type 2-alpha (478 aa).

Position 1 is an N-acetylmethionine (Met-1). The tract at residues 1-57 (MDETSPLVSPERAQPPEYTFPSVSGAHFPQVPGGAVRVAAAGSGPSPPCSPGHDRER) is disordered. Phosphoserine occurs at positions 5, 9, 43, 46, and 50. Over residues 31 to 44 (VPGGAVRVAAAGSG) the composition is skewed to low complexity. The region spanning 123 to 452 (SIYPERIYQG…VQMPPVIVET (330 aa)) is the PI3K/PI4K catalytic domain. Positions 129–135 (IYQGSSG) are G-loop. ATP-binding positions include 130–136 (YQGSSGS) and Lys-151. The interval 156–158 (EPY) is important for substrate binding. Residues 164 to 177 (KWTKWLQKLCCPCC) form an important for interaction with membranes region. S-palmitoyl cysteine attachment occurs at residues Cys-173, Cys-174, Cys-176, and Cys-177. Residue 260–263 (QLFV) coordinates ATP. Residues 267–275 (KDADYWLRR) form an important for interaction with membranes region. Residues 304–312 (RNTDRGNDN) are catalytic loop. Positions 343–363 (AIDNGLAFPLKHPDSWRAYPF) are activation loop. Asp-345 contacts ATP. Residues 358–367 (WRAYPFYWAW) form an important for interaction with membranes region. At Ser-461 the chain carries Phosphoserine.

Belongs to the PI3/PI4-kinase family. Type II PI4K subfamily. As to quaternary structure, associates with the BLOC-1 and the AP-3 complexes; the BLOC-1 complex is required for optimal binding of PI4K2A to the AP-3 complex. Interacts with BLOC1S5 and DTNBP1. Interacts with FOS; this interaction may enhance phosphatidylinositol phosphorylation activity. Interacts with ITCH. Interacts with ATG9A. Ubiquitinated by ITCH; this does not lead to proteasomal degradation. In terms of processing, palmitoylated. Palmitoylated by ZDHHC3 and ZDHHC7 in the CCPCC motif. Palmitoylation is cholesterol-dependent, and required for TGN localization. As to expression, detected in adult brain, especially in neurons in the cerebellum, brain cortex, dorsal root ganglion and spinal cord (at protein level).

The protein localises to the golgi apparatus. Its subcellular location is the trans-Golgi network membrane. The protein resides in the membrane raft. It is found in the endosome. It localises to the endosome membrane. The protein localises to the cytoplasmic vesicle. Its subcellular location is the cell projection. The protein resides in the dendrite. It is found in the presynaptic cell membrane. It localises to the synapse. The protein localises to the synaptosome. Its subcellular location is the mitochondrion. The protein resides in the membrane. It is found in the cell membrane. It localises to the perikaryon. The protein localises to the neuron projection. The catalysed reaction is a 1,2-diacyl-sn-glycero-3-phospho-(1D-myo-inositol) + ATP = a 1,2-diacyl-sn-glycero-3-phospho-(1D-myo-inositol 4-phosphate) + ADP + H(+). In terms of biological role, membrane-bound phosphatidylinositol-4 kinase (PI4-kinase) that catalyzes the phosphorylation of phosphatidylinositol (PI) to phosphatidylinositol 4-phosphate (PI4P), a lipid that plays important roles in endocytosis, Golgi function, protein sorting and membrane trafficking and is required for prolonged survival of neurons. Besides, phosphorylation of phosphatidylinositol (PI) to phosphatidylinositol 4-phosphate (PI4P) is the first committed step in the generation of phosphatidylinositol 4,5-bisphosphate (PIP2), a precursor of the second messenger inositol 1,4,5-trisphosphate (InsP3). In Rattus norvegicus (Rat), this protein is Phosphatidylinositol 4-kinase type 2-alpha (Pi4k2a).